We begin with the raw amino-acid sequence, 463 residues long: Chromosomal replication initiator protein DnaA (463 aa).

Positions 1–83 (MSTNQIILTD…LQLFQHYNNT (83 aa)) are domain I, interacts with DnaA modulators. The tract at residues 83 to 124 (TIKSIEIITKELPGTTQTVTELPTKTFADIGSSELNSENIFS) is domain II. A domain III, AAA+ region region spans residues 125–343 (TLDVRFTFDN…GALNKVIAHS (219 aa)). ATP-binding residues include Gly171, Gly173, Lys174, and Thr175. The domain IV, binds dsDNA stretch occupies residues 344–463 (NFTLKEITLE…INLLMKILQN (120 aa)).

Belongs to the DnaA family. In terms of assembly, oligomerizes as a right-handed, spiral filament on DNA at oriC.

The protein resides in the cytoplasm. Functionally, plays an essential role in the initiation and regulation of chromosomal replication. ATP-DnaA binds to the origin of replication (oriC) to initiate formation of the DNA replication initiation complex once per cell cycle. Binds the DnaA box (a 9 base pair repeat at the origin) and separates the double-stranded (ds)DNA. Forms a right-handed helical filament on oriC DNA; dsDNA binds to the exterior of the filament while single-stranded (ss)DNA is stabiized in the filament's interior. The ATP-DnaA-oriC complex binds and stabilizes one strand of the AT-rich DNA unwinding element (DUE), permitting loading of DNA polymerase. After initiation quickly degrades to an ADP-DnaA complex that is not apt for DNA replication. Binds acidic phospholipids. This is Chromosomal replication initiator protein DnaA from Rickettsia conorii (strain ATCC VR-613 / Malish 7).